The following is a 260-amino-acid chain: Hydroxyacylglutathione hydrolase (260 aa).

7 residues coordinate Zn(2+): H55, H57, D59, H60, H116, D133, and H171.

This sequence belongs to the metallo-beta-lactamase superfamily. Glyoxalase II family. In terms of assembly, monomer. The cofactor is Zn(2+).

The enzyme catalyses an S-(2-hydroxyacyl)glutathione + H2O = a 2-hydroxy carboxylate + glutathione + H(+). It functions in the pathway secondary metabolite metabolism; methylglyoxal degradation; (R)-lactate from methylglyoxal: step 2/2. Its function is as follows. Thiolesterase that catalyzes the hydrolysis of S-D-lactoyl-glutathione to form glutathione and D-lactic acid. This Shewanella loihica (strain ATCC BAA-1088 / PV-4) protein is Hydroxyacylglutathione hydrolase.